A 72-amino-acid chain; its full sequence is MAKEELLEFPGTVSELLPNATFRVKLENDHEIIAHTAGKMRKNRIRVLAGDKVLVEMTPYDLTKGRITYRFK.

The S1-like domain maps to 1-72 (MAKEELLEFP…TKGRITYRFK (72 aa)).

The protein belongs to the IF-1 family. Component of the 30S ribosomal translation pre-initiation complex which assembles on the 30S ribosome in the order IF-2 and IF-3, IF-1 and N-formylmethionyl-tRNA(fMet); mRNA recruitment can occur at any time during PIC assembly.

It is found in the cytoplasm. Functionally, one of the essential components for the initiation of protein synthesis. Stabilizes the binding of IF-2 and IF-3 on the 30S subunit to which N-formylmethionyl-tRNA(fMet) subsequently binds. Helps modulate mRNA selection, yielding the 30S pre-initiation complex (PIC). Upon addition of the 50S ribosomal subunit IF-1, IF-2 and IF-3 are released leaving the mature 70S translation initiation complex. The sequence is that of Translation initiation factor IF-1 from Caulobacter vibrioides (strain ATCC 19089 / CIP 103742 / CB 15) (Caulobacter crescentus).